The following is a 92-amino-acid chain: Pyrimidine/purine nucleoside phosphorylase (92 aa).

Belongs to the nucleoside phosphorylase PpnP family.

The enzyme catalyses a purine D-ribonucleoside + phosphate = a purine nucleobase + alpha-D-ribose 1-phosphate. The catalysed reaction is adenosine + phosphate = alpha-D-ribose 1-phosphate + adenine. It carries out the reaction cytidine + phosphate = cytosine + alpha-D-ribose 1-phosphate. It catalyses the reaction guanosine + phosphate = alpha-D-ribose 1-phosphate + guanine. The enzyme catalyses inosine + phosphate = alpha-D-ribose 1-phosphate + hypoxanthine. The catalysed reaction is thymidine + phosphate = 2-deoxy-alpha-D-ribose 1-phosphate + thymine. It carries out the reaction uridine + phosphate = alpha-D-ribose 1-phosphate + uracil. It catalyses the reaction xanthosine + phosphate = alpha-D-ribose 1-phosphate + xanthine. In terms of biological role, catalyzes the phosphorolysis of diverse nucleosides, yielding D-ribose 1-phosphate and the respective free bases. Can use uridine, adenosine, guanosine, cytidine, thymidine, inosine and xanthosine as substrates. Also catalyzes the reverse reactions. The chain is Pyrimidine/purine nucleoside phosphorylase from Rhodopirellula baltica (strain DSM 10527 / NCIMB 13988 / SH1).